The following is a 304-amino-acid chain: Non-structural maintenance of chromosomes element 3 homolog (304 aa).

2 disordered regions span residues 1–82 and 285–304; these read MLQK…PRSQ and ALAD…APSS. Residues 32-43 show a composition bias toward basic and acidic residues; that stretch reads AGEDARVLRDGF. Residues Ser-57, Ser-60, and Ser-64 each carry the phosphoserine modification. The segment covering 60 to 80 has biased composition (low complexity); that stretch reads SQGPSPQGARRAQAAPAVGPR. The segment at 78-304 is interaction with NSMCE1; sequence GPRSQKQLEL…PQPSGPAPSS (227 aa). The MAGE domain occupies 85–285; sequence LELKVSELVQ…KDWPAQYCEA (201 aa).

As to quaternary structure, component of the SMC5-SMC6 complex which consists at least of SMC5, SMC6, NSMCE2, NSMCE1, NSMCE4A or EID3 and NSMCE3. NSMCE1, NSMCE4A or EID3 and NSMCE3 probably form a subcomplex that bridges the head domains of the SMC5:SMC6 heterodimer. Interacts with PJA1. Interacts with E2F1 (via C-terminus). Interacts with NGFR (via C-terminus). Interacts with NSMCE1. Interacts with NSMCE4. Interacts with SMC6. Interacts with EID3. As to expression, ubiquitous.

It localises to the cytoplasm. The protein localises to the nucleus. Its subcellular location is the chromosome. The protein resides in the telomere. Functionally, component of the SMC5-SMC6 complex, a complex involved in repair of DNA double-strand breaks by homologous recombination. The complex may promote sister chromatid homologous recombination by recruiting the SMC1-SMC3 cohesin complex to double-strand breaks. The complex is required for telomere maintenance via recombination in ALT (alternative lengthening of telomeres) cell lines and mediates sumoylation of shelterin complex (telosome) components which is proposed to lead to shelterin complex disassembly in ALT-associated PML bodies (APBs). In vitro enhances ubiquitin ligase activity of NSMCE1. Proposed to act through recruitment and/or stabilization of the Ubl-conjugating enzyme (E2) at the E3:substrate complex. May be a growth suppressor that facilitates the entry of the cell into cell cycle arrest. The sequence is that of Non-structural maintenance of chromosomes element 3 homolog from Homo sapiens (Human).